The following is a 1264-amino-acid chain: MSSSPSPFGQNEWLVEEMYRKFREDPSSVDPSWHEFLVDYNPEPTTDSSASENGQQTRTAAPKAPPEPAPAPAPKSQDSKSQAPKQDSKPQESKPQAKAKPAESKSSTKPADAKSEKSGKSGTNGAAKPAAQPADDSDQNQVLRGAAAAVAKNMSASLDVPTATSVRAIPAKLMIDNRVVINNHLKRTRGGKISFTHLIGYAIVAAVKKFPNMNRHFAEVDGKPNAVTPAHTNLGLAIDLQGKDGNRQLVVAAIKKADTMRFGQFIAAYEDIVRRARDGKLTAEDFSGVTISLTNPGTIGTVHSVPRLMRGQGAIIGVGAMEYPAEFQGASEERIADLGIGKLITLTSTYDHRIIQGAESGDFLRTVHQLLLSDDFFDEIFRELGIPYEPVRWRTDNPDSIEDKNARVIELIAAYRNRGHLMADIDPLRLDSNRFRSHPDLDVLTHGLTLWDLDREFKVNGFAGAERKKLRDVLAVLRDAYCRHIGVEYTHILEPEQQQWLQERIEGKHEKPTVAQQKYILSRLNAAEAFETFLQTKYVGQKRFSLEGAETVIPAMDAVIDQCAEHALDEVVIGMPHRGRLNVLANIVGKPYSQIFSEFEGNLNPSQAHGSGDVKYHLGSSGTYLQMFGDNDITVSLTANPSHLEAVDPVMEGLVRAKQDLLDKGDTEDGYTVVPLMLHGDAAFAGQGVVAETLNLALLRGYRTGGTIHLIVNNQIGFTTSPAAAKSSEYCTDVAKMIGAPIFHVNGDDPEAAVWVSRLAVDFRQKFKKDVVIDLLCYRRRGHNEGDDPSMTQPSMYDVIDTKRGVRKSYTEALIGRGDISMKEAEDALRDYQGQLEQVFNEVRELEKHEIEPSESVEADQQIPAKLATAVDKSLLARIGDAHLAVPEGFTVHPRVKPVLEKRREMAYEGKVDWAFAELLALGTMISEGKLVRLSGQDTRRGTFTQRHSVVIDRKTGKEFTPLQLLATDSDGNPTGGKFLVYDSPLSEFAAVGFEYGYSVGNPDAMVLWEAQFGDFINGAQSIIDEFISSGEAKWGQLSDVVLLLPHGHEGQGPDHTSGRIERFLQLWAEGSMTIALPSTPANYFHLLRRHSLDGIQRPLIVFTPKSMLRNKAAVSDIRDFTEQKFRSVLEEPTYTDGDGDRNKVTRILLTSGKIYYELVARKNKESRDDVAIVRIEQLAPLPKRRLAETLDKYPNVDEKFWVQEEPANQGAWPTFGLTLPEMLPDHFTGIKRISRRAMSAPSSGSSKVHAVEQQEILDEAFAP.

Residues Met1–Asn41 are 2-oxoglutarate dehydrogenase E1, N-terminal part. Residues Arg23–Leu37 are compositionally biased toward basic and acidic residues. A disordered region spans residues Arg23 to Asn140. A linker region spans residues Pro42–Ala102. A compositionally biased stretch (polar residues) spans Glu43–Thr59. Pro residues predominate over residues Lys63–Ala73. Residues Glu103–Ser373 form a succinyltransferase E2 region. The active-site Proton acceptor; for succinyltransferase activity is the His352. Residues Asp374 to Pro1264 are 2-oxoglutarate dehydrogenase E1, C-terminal part. Position 578 (Arg578) interacts with thiamine diphosphate. His617 and Ser642 together coordinate 2-oxoglutarate. 6 residues coordinate thiamine diphosphate: Ser642, Leu644, Asp681, Ala682, Ala683, and Asn714. Residue Asp681 coordinates Mg(2+). Mg(2+) is bound by residues Asn714 and Ile716. The stretch at Asp819–Glu850 forms a coiled coil. His1056 serves as a coordination point for 2-oxoglutarate. Thr1074, Arg1090, Lys1125, Ser1128, Gln1178, Arg1185, and Arg1186 together coordinate acetyl-CoA.

This sequence belongs to the 2-oxoacid dehydrogenase family. Kgd subfamily. In terms of assembly, homodimer. The 2-oxoglutarate dehydrogenase (ODH) complex contains multiple copies of three enzymatic components: 2-oxoglutarate dehydrogenase (E1), dihydrolipoamide succinyltransferase (E2) and lipoamide dehydrogenase (E3). It depends on Mg(2+) as a cofactor. The cofactor is thiamine diphosphate.

It carries out the reaction glyoxylate + 2-oxoglutarate + H(+) = 2-hydroxy-3-oxoadipate + CO2. The enzyme catalyses 2-oxoglutarate + H(+) = succinate semialdehyde + CO2. The catalysed reaction is N(6)-[(R)-lipoyl]-L-lysyl-[protein] + 2-oxoglutarate + H(+) = N(6)-[(R)-S(8)-succinyldihydrolipoyl]-L-lysyl-[protein] + CO2. It catalyses the reaction N(6)-[(R)-dihydrolipoyl]-L-lysyl-[protein] + succinyl-CoA = N(6)-[(R)-S(8)-succinyldihydrolipoyl]-L-lysyl-[protein] + CoA. Its pathway is carbohydrate metabolism; tricarboxylic acid cycle; succinate from 2-oxoglutarate (transferase route): step 1/2. The protein operates within carbohydrate metabolism; tricarboxylic acid cycle; succinyl-CoA from 2-oxoglutarate (dehydrogenase route): step 1/1. Its activity is regulated as follows. Alpha-ketoglutarate dehydrogenase and decarboxylase activities are inhibited by unphosphorylated GarA, and allosterically activated by acetyl-CoA, the main substrate of the TCA cycle. In terms of biological role, shows three enzymatic activities that share a first common step, the attack of thiamine-PP on 2-oxoglutarate (alpha-ketoglutarate, KG), leading to the formation of an enamine-thiamine-PP intermediate upon decarboxylation. Thus, displays KGD activity, catalyzing the decarboxylation from five-carbon 2-oxoglutarate to four-carbon succinate semialdehyde (SSA). Also catalyzes C-C bond formation between the activated aldehyde formed after decarboxylation of alpha-ketoglutarate and the carbonyl of glyoxylate (GLX), to yield 2-hydroxy-3-oxoadipate (HOA), which spontaneously decarboxylates to form 5-hydroxylevulinate (HLA). And is also a component of the 2-oxoglutarate dehydrogenase (ODH) complex, that catalyzes the overall conversion of 2-oxoglutarate to succinyl-CoA and CO(2). The KG decarboxylase and KG dehydrogenase reactions provide two alternative, tightly regulated, pathways connecting the oxidative and reductive branches of the TCA cycle. This chain is Multifunctional 2-oxoglutarate metabolism enzyme (kgd), found in Mycobacterium sp. (strain JLS).